Here is a 176-residue protein sequence, read N- to C-terminus: Peptide methionine sulfoxide reductase MsrA (176 aa).

The active site involves Cys-10.

This sequence belongs to the MsrA Met sulfoxide reductase family.

The enzyme catalyses L-methionyl-[protein] + [thioredoxin]-disulfide + H2O = L-methionyl-(S)-S-oxide-[protein] + [thioredoxin]-dithiol. The catalysed reaction is [thioredoxin]-disulfide + L-methionine + H2O = L-methionine (S)-S-oxide + [thioredoxin]-dithiol. Has an important function as a repair enzyme for proteins that have been inactivated by oxidation. Catalyzes the reversible oxidation-reduction of methionine sulfoxide in proteins to methionine. The sequence is that of Peptide methionine sulfoxide reductase MsrA from Leptospira borgpetersenii serovar Hardjo-bovis (strain L550).